Consider the following 187-residue polypeptide: MISSNDFRTGTTIELDGQVWRVIEFLHVKPGKGSAFVRTKLKNVMTGNVNERTFRAGETLPQAVVEKRDMQFVYPQGDNEYVFMDMESYEQEALTRETLGDGAKYLKEGMSVSILKWQERVIGVDLPNTVVLQVVETDPGVKGDTAQGGTKPAKVETGAEVMVPLFITIGEKIKIDTRDNSYLGREN.

Belongs to the elongation factor P family.

It is found in the cytoplasm. It participates in protein biosynthesis; polypeptide chain elongation. In terms of biological role, involved in peptide bond synthesis. Stimulates efficient translation and peptide-bond synthesis on native or reconstituted 70S ribosomes in vitro. Probably functions indirectly by altering the affinity of the ribosome for aminoacyl-tRNA, thus increasing their reactivity as acceptors for peptidyl transferase. This chain is Elongation factor P, found in Gloeobacter violaceus (strain ATCC 29082 / PCC 7421).